The chain runs to 546 residues: MFS-type transporter GME11371 (546 aa).

7 helical membrane-spanning segments follow: residues 39–59 (LTYLFLALILCMLLAVIDLTI), 77–96 (IGWYASVFFMTVASSQSSWG), 107–127 (MFLLAMGIFELGNVICGAAPT), 137–157 (ITGIGAAGVIAGCFTVAAFAV), 167–187 (GGLAATYGVGSSIGPIIGGVL), 195–215 (WCFYINLPIGGFAAIVLFLFF), and 240–260 (FPGFFCCIAAVTCLLLALLWG). Asparagine 267 carries N-linked (GlcNAc...) asparagine glycosylation. The next 7 helical transmembrane spans lie at 270-290 (DVIGTLVGFFLFTALFAVVEW), 307-327 (VVLFGTIGGFFAGGAQFVLVY), 349-369 (LPYIIGSTITTIVAGTTISAT), 370-390 (GYFTPLIVGGGALWTVSAGLI), 402-422 (WIGYQALAGLAVGLCYQPPIL), 433-453 (VAATSAILLFFQTMGGAFMVS), and 509-529 (ISFAIIIALTGASTVAGIFMP).

The protein belongs to the major facilitator superfamily.

It is found in the cell membrane. The protein operates within secondary metabolite biosynthesis. MFS-type transporter; part of the gene cluster that mediates the biosynthesis of dibenzodioxocinones such as pestalotiollide B, a novel class of inhibitors against cholesterol ester transfer protein (CEPT). essential for dibenzodioxocinones biosynthesis and may be involved in the secretion of the cluster products. The protein is MFS-type transporter GME11371 of Pestalotiopsis microspora.